The primary structure comprises 241 residues: Venom nerve growth factor (241 aa).

An N-terminal signal peptide occupies residues 1-18 (MSMLCYTLIIAFLIGIWA). The propeptide occupies 19 to 122 (APKSEDNVPL…SLNRNIRAKR (104 aa)). 3 disulfides stabilise this stretch: Cys136–Cys201, Cys179–Cys229, and Cys189–Cys231. Asn145 carries N-linked (GlcNAc...) asparagine glycosylation.

The protein belongs to the NGF-beta family. In terms of assembly, homodimer; non-covalently linked. In terms of tissue distribution, expressed by the venom gland.

It localises to the secreted. Nerve growth factor is important for the development and maintenance of the sympathetic and sensory nervous systems. It stimulates division and differentiation of sympathetic and embryonic sensory neurons as well as basal forebrain cholinergic neurons in the brain. Its relevance in the snake venom is not clear. However, it has been shown to inhibit metalloproteinase-dependent proteolysis of platelet glycoprotein Ib alpha, suggesting a metalloproteinase inhibition to prevent metalloprotease autodigestion and/or protection against prey proteases. Binds a lipid between the two protein chains in the homodimer. The lipid-bound form promotes histamine relase from mouse mast cells, contrary to the lipid-free form. The protein is Venom nerve growth factor of Crotalus durissus terrificus (South American rattlesnake).